The chain runs to 24 residues: Potassium channel toxin alpha-KTx 6 OcyKTx5 (24 aa).

Residues cysteine 3 and cysteine 24 are joined by a disulfide bond.

The protein belongs to the short scorpion toxin superfamily. Potassium channel inhibitor family. Alpha-KTx 06 subfamily. In terms of tissue distribution, expressed by the venom gland.

It is found in the secreted. Functionally, blocks voltage-gated potassium channels. The chain is Potassium channel toxin alpha-KTx 6 OcyKTx5 from Opisthacanthus cayaporum (South American scorpion).